A 312-amino-acid polypeptide reads, in one-letter code: Cathepsin O (312 aa).

The signal sequence occupies residues 1–23 (MKPQLVNLLLLCCCCLGRHGVAG). A propeptide spans 24-98 (TWSWSHQREA…EGQRPIPNVS (75 aa)) (activation peptide). Asn53 and Asn96 each carry an N-linked (GlcNAc...) asparagine glycan. Intrachain disulfides connect Cys120–Cys161, Cys154–Cys195, and Cys253–Cys301. The active site involves Cys123. Residues His260 and Asn280 contribute to the active site.

The protein belongs to the peptidase C1 family.

Its subcellular location is the lysosome. The catalysed reaction is The recombinant human enzyme hydrolyzes synthetic endopeptidase substrates including Z-Phe-Arg-NHMec and Z-Arg-Arg-NHMec.. In terms of biological role, proteolytic enzyme possibly involved in normal cellular protein degradation and turnover. This is Cathepsin O (Ctso) from Mus musculus (Mouse).